A 68-amino-acid chain; its full sequence is Large ribosomal subunit protein bL32 (68 aa).

The segment at 1–25 is disordered; that stretch reads MAVPQNKITKSRRGQRRSHDALVAG.

Belongs to the bacterial ribosomal protein bL32 family.

The protein is Large ribosomal subunit protein bL32 of Dinoroseobacter shibae (strain DSM 16493 / NCIMB 14021 / DFL 12).